Consider the following 347-residue polypeptide: Haptoglobin (347 aa).

An N-terminal signal peptide occupies residues 1–18; that stretch reads MRALGAVVTLLLWGQLFA. In terms of domain architecture, Sushi spans 31-88; the sequence is DSCPKPPEIANGYVEHLVRYRCRQFYKLQTEGDGIYTLNSEKQWVNPAAGDKLPKCEA. Disulfide bonds link cysteine 52/cysteine 86, cysteine 90/cysteine 207, cysteine 250/cysteine 281, and cysteine 292/cysteine 322. The region spanning 103-345 is the Peptidase S1 domain; sequence IIGGSMDAKG…LKDWVQETMA (243 aa). N-linked (GlcNAc...) asparagine glycans are attached at residues asparagine 148 and asparagine 152. An interaction with CD163 region spans residues 259-264; the sequence is VPEKKG.

It belongs to the peptidase S1 family. As to quaternary structure, tetramer of two alpha and two beta chains; disulfide-linked. The hemoglobin/haptoglobin complex is composed of a haptoglobin dimer bound to two hemoglobin alpha-beta dimers. Interacts with CD163. Interacts with ERGIC3. As to expression, expressed by the liver and secreted in plasma.

Its subcellular location is the secreted. Functionally, as a result of hemolysis, hemoglobin is found to accumulate in the kidney and is secreted in the urine. Haptoglobin captures, and combines with free plasma hemoglobin to allow hepatic recycling of heme iron and to prevent kidney damage. Haptoglobin also acts as an antioxidant, has antibacterial activity and plays a role in modulating many aspects of the acute phase response. Hemoglobin/haptoglobin complexes are rapidly cleared by the macrophage CD163 scavenger receptor expressed on the surface of liver Kupfer cells through an endocytic lysosomal degradation pathway. The protein is Haptoglobin (Hp) of Rattus norvegicus (Rat).